A 320-amino-acid polypeptide reads, in one-letter code: ATP-dependent 6-phosphofructokinase (320 aa).

G12 contributes to the ATP binding site. Residues 22–26 (RGVVR) and 55–60 (RYSVSD) each bind ADP. ATP contacts are provided by residues 73 to 74 (RF) and 103 to 106 (GDGS). D104 is a binding site for Mg(2+). Position 126–128 (126–128 (TID)) interacts with substrate. The Proton acceptor role is filled by D128. R155 provides a ligand contact to ADP. Substrate is bound by residues R163 and 170 to 172 (MGR). Residues 186 to 188 (GCE), K212, and 214 to 216 (KKH) contribute to the ADP site. Substrate contacts are provided by residues E223, R244, and 250-253 (HIQR).

Belongs to the phosphofructokinase type A (PFKA) family. ATP-dependent PFK group I subfamily. Prokaryotic clade 'B1' sub-subfamily. Homotetramer. It depends on Mg(2+) as a cofactor.

It localises to the cytoplasm. The catalysed reaction is beta-D-fructose 6-phosphate + ATP = beta-D-fructose 1,6-bisphosphate + ADP + H(+). Its pathway is carbohydrate degradation; glycolysis; D-glyceraldehyde 3-phosphate and glycerone phosphate from D-glucose: step 3/4. Allosterically activated by ADP and other diphosphonucleosides, and allosterically inhibited by phosphoenolpyruvate. Catalyzes the phosphorylation of D-fructose 6-phosphate to fructose 1,6-bisphosphate by ATP, the first committing step of glycolysis. The protein is ATP-dependent 6-phosphofructokinase of Serratia proteamaculans (strain 568).